The sequence spans 652 residues: Probable L-type lectin-domain containing receptor kinase S.5 (652 aa).

A signal peptide spans 1 to 20 (MRFSLAWKLLFLILTCKIET). The Extracellular portion of the chain corresponds to 21-266 (QVKCLKFDFP…EGLKIDGDGN (246 aa)). The segment at 24-257 (CLKFDFPGFN…LNCVRSWSFE (234 aa)) is legume-lectin like. 8 N-linked (GlcNAc...) asparagine glycosylation sites follow: asparagine 33, asparagine 91, asparagine 97, asparagine 100, asparagine 122, asparagine 139, asparagine 201, and asparagine 244. The chain crosses the membrane as a helical span at residues 267-287 (MLWLWITIPIVFIVGIGAFLG). Topologically, residues 288–652 (ALYLRSRSKA…INSLTELTGR (365 aa)) are cytoplasmic. Residues 330–622 (FGAENKLGQG…PDVPTERPAF (293 aa)) enclose the Protein kinase domain. Residues 336 to 344 (LGQGGFGMV) and lysine 357 contribute to the ATP site. Aspartate 455 functions as the Proton acceptor in the catalytic mechanism.

It in the C-terminal section; belongs to the protein kinase superfamily. Ser/Thr protein kinase family. In the N-terminal section; belongs to the leguminous lectin family.

It is found in the cell membrane. The enzyme catalyses L-seryl-[protein] + ATP = O-phospho-L-seryl-[protein] + ADP + H(+). It carries out the reaction L-threonyl-[protein] + ATP = O-phospho-L-threonyl-[protein] + ADP + H(+). This is Probable L-type lectin-domain containing receptor kinase S.5 (LECRKS5) from Arabidopsis thaliana (Mouse-ear cress).